The primary structure comprises 368 residues: DNA replication and repair protein RecF (368 aa).

30–37 (GDNGAGKT) provides a ligand contact to ATP.

The protein belongs to the RecF family.

Its subcellular location is the cytoplasm. Functionally, the RecF protein is involved in DNA metabolism; it is required for DNA replication and normal SOS inducibility. RecF binds preferentially to single-stranded, linear DNA. It also seems to bind ATP. The sequence is that of DNA replication and repair protein RecF from Xanthomonas campestris pv. campestris (strain 8004).